A 261-amino-acid chain; its full sequence is Carnitinyl-CoA dehydratase (261 aa).

Residue glutamate 111 is the Nucleophile of the active site. Catalysis depends on glutamate 131, which acts as the Proton acceptor.

Belongs to the enoyl-CoA hydratase/isomerase family.

The enzyme catalyses (R)-carnitinyl-CoA = crotonobetainyl-CoA + H2O. The protein operates within amine and polyamine metabolism; carnitine metabolism. Catalyzes the reversible dehydration of L-carnitinyl-CoA to crotonobetainyl-CoA. This is Carnitinyl-CoA dehydratase from Salmonella arizonae (strain ATCC BAA-731 / CDC346-86 / RSK2980).